Here is a 608-residue protein sequence, read N- to C-terminus: Glutamine--fructose-6-phosphate aminotransferase [isomerizing] (608 aa).

Cys2 (nucleophile; for GATase activity) is an active-site residue. The Glutamine amidotransferase type-2 domain occupies 2-217; it reads CGIVGYSGKK…DKEFVVLTSE (216 aa). SIS domains follow at residues 285–424 and 453–598; these read TKEQ…NKNT and KVQK…VDKP. The active-site For Fru-6P isomerization activity is Lys603.

As to quaternary structure, homodimer.

The protein resides in the cytoplasm. The enzyme catalyses D-fructose 6-phosphate + L-glutamine = D-glucosamine 6-phosphate + L-glutamate. Its function is as follows. Catalyzes the first step in hexosamine metabolism, converting fructose-6P into glucosamine-6P using glutamine as a nitrogen source. In Clostridium acetobutylicum (strain ATCC 824 / DSM 792 / JCM 1419 / IAM 19013 / LMG 5710 / NBRC 13948 / NRRL B-527 / VKM B-1787 / 2291 / W), this protein is Glutamine--fructose-6-phosphate aminotransferase [isomerizing].